A 234-amino-acid polypeptide reads, in one-letter code: tRNA (guanine-N(1)-)-methyltransferase (234 aa).

Gly113 lines the S-adenosyl-L-methionine pocket.

It belongs to the RNA methyltransferase TrmD family. As to quaternary structure, homodimer.

The protein resides in the cytoplasm. The catalysed reaction is guanosine(37) in tRNA + S-adenosyl-L-methionine = N(1)-methylguanosine(37) in tRNA + S-adenosyl-L-homocysteine + H(+). Functionally, specifically methylates guanosine-37 in various tRNAs. In Gluconobacter oxydans (strain 621H) (Gluconobacter suboxydans), this protein is tRNA (guanine-N(1)-)-methyltransferase.